The chain runs to 431 residues: Adenylosuccinate synthetase (431 aa).

GTP contacts are provided by residues 12–18 and 40–42; these read GDEGKGK and GHT. The active-site Proton acceptor is D13. 2 residues coordinate Mg(2+): D13 and G40. Residues 13–16, 38–41, T130, R144, Q225, T240, and R304 contribute to the IMP site; these read DEGK and NAGH. Catalysis depends on H41, which acts as the Proton donor. 300–306 is a binding site for substrate; the sequence is ATTGRPR. Residues R306, 332–334, and 414–416 each bind GTP; these read KLD and SVG.

The protein belongs to the adenylosuccinate synthetase family. In terms of assembly, homodimer. Mg(2+) is required as a cofactor.

It is found in the cytoplasm. The enzyme catalyses IMP + L-aspartate + GTP = N(6)-(1,2-dicarboxyethyl)-AMP + GDP + phosphate + 2 H(+). Its pathway is purine metabolism; AMP biosynthesis via de novo pathway; AMP from IMP: step 1/2. Its function is as follows. Plays an important role in the de novo pathway of purine nucleotide biosynthesis. Catalyzes the first committed step in the biosynthesis of AMP from IMP. This Anaeromyxobacter sp. (strain Fw109-5) protein is Adenylosuccinate synthetase.